The sequence spans 655 residues: p-hydroxybenzoic acid efflux pump subunit AaeB (655 aa).

A run of 11 helical transmembrane segments spans residues 13-33, 38-58, 69-89, 93-113, 121-141, 152-172, 370-390, 407-427, 431-451, 459-479, and 482-502; these read FAVKLACAIVLALFIGFHFQL, WAVLTAAIVAAGPAFAAGGEP, LRIIGTFIGCIAALIIIISMI, LLMILVCCVWAGFCTWISSLV, WGLSGYTALIIVITIQTEPLL, EIVIGIGCAILADLLFSPRSI, LFWLWTGWTSGNGAMVMIAVV, FIYGTLAALPLGLLYFLVIIP, QSMLLLCLSLAVLGFFIGIEV, MGALASTINIIVLDNPMTFHF, and FLDSALGQIVGCMLAFIVILL.

Belongs to the aromatic acid exporter ArAE (TC 2.A.85) family.

It localises to the cell inner membrane. Its function is as follows. Forms an efflux pump with AaeA. Could function as a metabolic relief valve, allowing to eliminate certain compounds when they accumulate to high levels in the cell. The chain is p-hydroxybenzoic acid efflux pump subunit AaeB from Salmonella arizonae (strain ATCC BAA-731 / CDC346-86 / RSK2980).